Reading from the N-terminus, the 75-residue chain is Large ribosomal subunit protein bL31 (75 aa).

It belongs to the bacterial ribosomal protein bL31 family. Type A subfamily. In terms of assembly, part of the 50S ribosomal subunit.

Binds the 23S rRNA. This is Large ribosomal subunit protein bL31 from Nitrobacter winogradskyi (strain ATCC 25391 / DSM 10237 / CIP 104748 / NCIMB 11846 / Nb-255).